The following is a 446-amino-acid chain: Phosphoglucosamine mutase (446 aa).

Serine 102 acts as the Phosphoserine intermediate in catalysis. Residues serine 102, aspartate 241, aspartate 243, and aspartate 245 each contribute to the Mg(2+) site. A Phosphoserine modification is found at serine 102.

This sequence belongs to the phosphohexose mutase family. The cofactor is Mg(2+). Post-translationally, activated by phosphorylation.

The enzyme catalyses alpha-D-glucosamine 1-phosphate = D-glucosamine 6-phosphate. Its function is as follows. Catalyzes the conversion of glucosamine-6-phosphate to glucosamine-1-phosphate. The sequence is that of Phosphoglucosamine mutase from Idiomarina loihiensis (strain ATCC BAA-735 / DSM 15497 / L2-TR).